Consider the following 481-residue polypeptide: U6 small nuclear RNA (adenine-(43)-N(6))-methyltransferase (481 aa).

Residues Lys-82, Gly-108, Asp-131, Thr-164, and Asn-184 each contribute to the S-adenosyl-L-methionine site.

Belongs to the methyltransferase superfamily. METTL16/RlmF family. Self-associates. Interacts with dlc-1; the interaction is direct, and is required for nuclear localization of mett-10.

It localises to the nucleus. It catalyses the reaction an adenosine in mRNA + S-adenosyl-L-methionine = an N(6)-methyladenosine in mRNA + S-adenosyl-L-homocysteine + H(+). The catalysed reaction is adenosine in U6 snRNA + S-adenosyl-L-methionine = N(6)-methyladenosine in U6 snRNA + S-adenosyl-L-homocysteine + H(+). RNA N6-methyltransferase that methylates adenosine residues at the N(6) position of a subset of RNAs and is involved in S-adenosyl-L-methionine homeostasis by regulating splicing of S-adenosylmethionine synthase transcripts (sams-3, sams-4 and sams-5). Able to N6-methylate a subset of mRNAs containing the 5'UACAGAAAC-3' nonamer sequence. Plays a key role in S-adenosyl-L-methionine homeostasis: under rich-diet conditions, catalyzes N6-methylation of S-adenosylmethionine synthase mRNAs (sams-3, sams-4 and sams-5), directly inhibiting splicing and protein production of S-adenosylmethionine synthase. In addition to mRNAs, also able to mediate N6-methylation of U6 small nuclear RNA (U6 snRNA). Required for gamete production, inhibiting germ cell proliferative fate and ensuring germ cell meiotic development. Also promotes progression of the mitotic cell cycle in those germ cells that continue to proliferate. Plays a role in the development of the vulva, somatic gonad and embryo. The sequence is that of U6 small nuclear RNA (adenine-(43)-N(6))-methyltransferase from Caenorhabditis briggsae.